The following is a 308-amino-acid chain: GTPase Era (308 aa).

The Era-type G domain occupies 14–181; that stretch reads RCGFVALIGA…KQALAAMVPP (168 aa). The G1 stretch occupies residues 22–29; the sequence is GAPNVGKS. A GTP-binding site is contributed by 22-29; it reads GAPNVGKS. The segment at 48–52 is G2; that stretch reads QTTRA. A G3 region spans residues 69–72; sequence DTPG. Residues 69–73 and 131–134 each bind GTP; these read DTPGI and NKVD. The segment at 131–134 is G4; that stretch reads NKVD. A G5 region spans residues 160–162; sequence ISA. One can recognise a KH type-2 domain in the interval 212–289; sequence LHQELPYQST…HLFLFVKVRE (78 aa).

It belongs to the TRAFAC class TrmE-Era-EngA-EngB-Septin-like GTPase superfamily. Era GTPase family. In terms of assembly, monomer.

The protein localises to the cytoplasm. The protein resides in the cell inner membrane. Its function is as follows. An essential GTPase that binds both GDP and GTP, with rapid nucleotide exchange. Plays a role in 16S rRNA processing and 30S ribosomal subunit biogenesis and possibly also in cell cycle regulation and energy metabolism. In Bradyrhizobium sp. (strain BTAi1 / ATCC BAA-1182), this protein is GTPase Era.